The sequence spans 421 residues: uncharacterized protein (421 aa).

Residues 14-72 (DLTKGDTITVEVTRPAHGGEGIAHHGGRVIFVRGGFPGDDVDVEITQVKKRFARGFVVQ) form the TRAM domain. Residues Gln-250, Tyr-286, Glu-308, and Asp-349 each coordinate S-adenosyl-L-methionine. Catalysis depends on Cys-376, which acts as the Nucleophile.

The protein belongs to the class I-like SAM-binding methyltransferase superfamily. RNA M5U methyltransferase family.

This is an uncharacterized protein from Corynebacterium efficiens (strain DSM 44549 / YS-314 / AJ 12310 / JCM 11189 / NBRC 100395).